The chain runs to 346 residues: tRNA(Ile)-lysidine synthase (346 aa).

An ATP-binding site is contributed by S32–S37.

The protein belongs to the tRNA(Ile)-lysidine synthase family.

Its subcellular location is the cytoplasm. It carries out the reaction cytidine(34) in tRNA(Ile2) + L-lysine + ATP = lysidine(34) in tRNA(Ile2) + AMP + diphosphate + H(+). Ligates lysine onto the cytidine present at position 34 of the AUA codon-specific tRNA(Ile) that contains the anticodon CAU, in an ATP-dependent manner. Cytidine is converted to lysidine, thus changing the amino acid specificity of the tRNA from methionine to isoleucine. The protein is tRNA(Ile)-lysidine synthase of Rhodopseudomonas palustris (strain ATCC BAA-98 / CGA009).